The primary structure comprises 328 residues: Biotin synthase (328 aa).

The region spanning 50–277 (FGDQVHLCCI…GKEIVICGGR (228 aa)) is the Radical SAM core domain. [4Fe-4S] cluster is bound by residues cysteine 67, cysteine 71, and cysteine 74. Positions 111, 142, and 202 each coordinate [2Fe-2S] cluster.

The protein belongs to the radical SAM superfamily. Biotin synthase family. As to quaternary structure, homodimer. [4Fe-4S] cluster serves as cofactor. [2Fe-2S] cluster is required as a cofactor.

The catalysed reaction is (4R,5S)-dethiobiotin + (sulfur carrier)-SH + 2 reduced [2Fe-2S]-[ferredoxin] + 2 S-adenosyl-L-methionine = (sulfur carrier)-H + biotin + 2 5'-deoxyadenosine + 2 L-methionine + 2 oxidized [2Fe-2S]-[ferredoxin]. It participates in cofactor biosynthesis; biotin biosynthesis; biotin from 7,8-diaminononanoate: step 2/2. Catalyzes the conversion of dethiobiotin (DTB) to biotin by the insertion of a sulfur atom into dethiobiotin via a radical-based mechanism. In Desulfatibacillum aliphaticivorans, this protein is Biotin synthase.